Here is a 123-residue protein sequence, read N- to C-terminus: MPPKAASKGAKKAASKAKAARSTDKKKRRRRRESYSIYIYKVLKQVHPDTGISSKAMSIMNSFVNDIFERIAAEASRLAHYNRRSTITSREIQTAVRLLLPGELAKHAVSEGTKAVTKYTQSK.

Residues 1-32 form a disordered region; that stretch reads MPPKAASKGAKKAASKAKAARSTDKKKRRRRR. Residues 9–32 are compositionally biased toward basic residues; it reads GAKKAASKAKAARSTDKKKRRRRR. Serine 110 is a glycosylation site (O-linked (GlcNAc) serine). Lysine 118 participates in a covalent cross-link: Glycyl lysine isopeptide (Lys-Gly) (interchain with G-Cter in ubiquitin).

Belongs to the histone H2B family. The nucleosome is a histone octamer containing two molecules each of H2A, H2B, H3 and H4 assembled in one H3-H4 heterotetramer and two H2A-H2B heterodimers. The octamer wraps approximately 147 bp of DNA. Monoubiquitination of Lys-118 gives a specific tag for epigenetic transcriptional activation and is also prerequisite for histone H3 'Lys-4' and 'Lys-79' methylation.

It is found in the nucleus. The protein localises to the chromosome. Its function is as follows. Core component of nucleosome. Nucleosomes wrap and compact DNA into chromatin, limiting DNA accessibility to the cellular machineries which require DNA as a template. Histones thereby play a central role in transcription regulation, DNA repair, DNA replication and chromosomal stability. DNA accessibility is regulated via a complex set of post-translational modifications of histones, also called histone code, and nucleosome remodeling. This Urechis caupo (Innkeeper worm) protein is Histone H2B.